The following is a 144-amino-acid chain: Large ribosomal subunit protein uL15 (144 aa).

The interval 1–58 (MKLNTLSPAAGAKHAAKRVGRGIGSGLGKTAGRGHKGQKSRSGGSIRPGFEGGQMPLK) is disordered. A compositionally biased stretch (gly residues) spans 21–31 (RGIGSGLGKTA).

The protein belongs to the universal ribosomal protein uL15 family. As to quaternary structure, part of the 50S ribosomal subunit.

Binds to the 23S rRNA. The chain is Large ribosomal subunit protein uL15 from Psychromonas ingrahamii (strain DSM 17664 / CCUG 51855 / 37).